The sequence spans 309 residues: Thiamine-monophosphate kinase (309 aa).

Residues Asp-25, Thr-39, Ser-40, and Asp-41 each coordinate Mg(2+). Asp-48 serves as a coordination point for substrate. Asp-69 and Asp-117 together coordinate Mg(2+). ATP-binding positions include 116 to 117 (GD) and Arg-140. A Mg(2+)-binding site is contributed by Asp-201. Position 203 (Ser-203) interacts with ATP. Asp-204 lines the Mg(2+) pocket. The substrate site is built by Glu-250 and Trp-298.

The protein belongs to the thiamine-monophosphate kinase family.

The enzyme catalyses thiamine phosphate + ATP = thiamine diphosphate + ADP. The protein operates within cofactor biosynthesis; thiamine diphosphate biosynthesis; thiamine diphosphate from thiamine phosphate: step 1/1. Its function is as follows. Catalyzes the ATP-dependent phosphorylation of thiamine-monophosphate (TMP) to form thiamine-pyrophosphate (TPP), the active form of vitamin B1. The polypeptide is Thiamine-monophosphate kinase (Pyrococcus horikoshii (strain ATCC 700860 / DSM 12428 / JCM 9974 / NBRC 100139 / OT-3)).